The following is a 454-amino-acid chain: Natural cytotoxicity triggering receptor 3 ligand 1 (454 aa).

The first 24 residues, 1-24, serve as a signal peptide directing secretion; it reads MTWRAAASTCAALLILLWALTTEG. Residues 25-262 lie on the Extracellular side of the membrane; the sequence is DLKVEMMAGG…SETEKTDNFS (238 aa). Residues 27–138 form the Ig-like V-type domain; that stretch reads KVEMMAGGTQ…LKAQGTVQLE (112 aa). Residues Asn43 and Asn57 are each glycosylated (N-linked (GlcNAc...) asparagine). The cysteines at positions 48 and 122 are disulfide-linked. Interaction with NCR3 stretches follow at residues 59–62 and 127–130; these read TSMG and TPLK. The region spanning 143–244 is the Ig-like C1-type domain; it reads PASRLLLDQV…LHTPLRSNFT (102 aa). A disulfide bridge links Cys163 with Cys228. N-linked (GlcNAc...) asparagine glycans are attached at residues Asn174, Asn208, Asn216, Asn242, and Asn260. The chain crosses the membrane as a helical span at residues 263–283; that stretch reads IHWWPISFIGVGLVLLIVLIP. The Cytoplasmic portion of the chain corresponds to 284–454; sequence WKKICNKSSS…QPPTLLLPLQ (171 aa). Residues 291-429 form a retroviral-Gag-like region; that stretch reads SSSAYTPLKC…APILPVSPIW (139 aa). A disordered region spans residues 395–454; the sequence is GKSIDDNSTKSEKQTPREHSDAVPDAPILPVSPIWEPPPATTSTTPVLSSQPPTLLLPLQ. Positions 397 to 416 are enriched in basic and acidic residues; it reads SIDDNSTKSEKQTPREHSDA. The segment covering 435-454 has biased composition (low complexity); that stretch reads TTSTTPVLSSQPPTLLLPLQ.

In terms of assembly, monomer. Interacts specifically with NCR3, but not with other natural killer cell-activating receptors, including NCR1, NCR2 and KLRK1. Not detected in any normal tissue tested. Expressed at the surface of several tumor cell lines including T and B-lymphomas, myeloid leukemias, melanomas, carcinomas and large T SV40 antigen-transformed cells (at protein level).

It is found in the cell membrane. Triggers NCR3-dependent natural killer cell activation. The protein is Natural cytotoxicity triggering receptor 3 ligand 1 (NCR3LG1) of Homo sapiens (Human).